The sequence spans 1052 residues: Germline survival defective-1 (1052 aa).

A signal peptide spans 1–25 (MRCLISYLFHSFLIFLKFIRSDVTA). Disordered regions lie at residues 41-320 (LMKS…DPKN), 478-543 (VNGI…QSVP), 667-689 (PSSQ…EEFE), 933-965 (KQTL…NSYA), and 1033-1052 (SNNT…NSNF). Positions 67–145 (ATATAAATTQ…SSTSSTSQQT (79 aa)) are enriched in low complexity. Positions 163-172 (TSNTANSQSG) are enriched in polar residues. Basic and acidic residues predominate over residues 178–190 (TNKDRPKEKEKNT). Positions 244–279 (NAKSSGFLSNSSLSSAGQISASSAPPVSTTPTAIPI) are enriched in low complexity. A compositionally biased stretch (basic and acidic residues) spans 305–320 (KRDEEPMPYKSTDPKN). The gld-4 binding stretch occupies residues 424-732 (QHPPGLPPLL…QIEKNDNLFS (309 aa)). Over residues 480–514 (GISNNIPSDRQQLDSKPNTARGSSGNINQSNTTSP) the composition is skewed to polar residues. Residues 674–689 (DENDTDSDHESEEEFE) are compositionally biased toward acidic residues. A gld-3 binding region spans residues 892–1052 (PIELPVNMQP…SGGGNQNSNF (161 aa)). Low complexity predominate over residues 950–963 (EGSQQNGGTSSSNS). Residues 1038–1052 (GVNGNSGGGNQNSNF) show a composition bias toward gly residues.

In terms of assembly, isoform C interacts (via C-terminus) with gld-3 isoform A (via C-terminus) in an RNA-independent manner. Isoform C interacts with gld-4. As to expression, expressed in the germline (at protein level). In the early embryo is expressed in all cells, then becomes gradually restricted to the germ cell lineage and enriches in P granules (at protein level). In adult hermaphrodites, is expressed in the mitotic region, accumulates during early stages of meiotic prophase I and is slightly less abundant in maturing oocytes (at protein level).

The protein resides in the cytoplasm. Its subcellular location is the cytoplasmic granule. Its function is as follows. Required maternally for germline survival by forming a maternal complex with gld-3. During hermaphrodite development forms a complex with gld-3 which promotes the sperm/oocyte switch freeing the translational repressor fbf to turn off sperm promoting factors. Required for proper oocyte differentiation and oogenic meiotic arrest. Stimulates the enzymatic activity of gld-4 and together they prevent gld-1 mRNA degradation. The sequence is that of Germline survival defective-1 from Caenorhabditis elegans.